Here is a 255-residue protein sequence, read N- to C-terminus: Pimeloyl-[acyl-carrier protein] methyl ester esterase (255 aa).

The AB hydrolase-1 domain maps to 16 to 242 (LVLLHGWGMN…SSHAPFITEP (227 aa)). Substrate contacts are provided by residues tryptophan 22, 82–83 (SL), and 143–147 (FMALQ). Serine 82 serves as the catalytic Nucleophile. Residues aspartate 207 and histidine 235 contribute to the active site. Residue histidine 235 coordinates substrate.

Belongs to the AB hydrolase superfamily. Carboxylesterase BioH family. Monomer.

The protein resides in the cytoplasm. The enzyme catalyses 6-carboxyhexanoyl-[ACP] methyl ester + H2O = 6-carboxyhexanoyl-[ACP] + methanol + H(+). It participates in cofactor biosynthesis; biotin biosynthesis. Functionally, the physiological role of BioH is to remove the methyl group introduced by BioC when the pimeloyl moiety is complete. It allows to synthesize pimeloyl-ACP via the fatty acid synthetic pathway through the hydrolysis of the ester bonds of pimeloyl-ACP esters. The sequence is that of Pimeloyl-[acyl-carrier protein] methyl ester esterase from Vibrio vulnificus (strain CMCP6).